The sequence spans 156 residues: ATP synthase subunit b (156 aa).

A helical membrane pass occupies residues leucine 7 to proline 27.

This sequence belongs to the ATPase B chain family. As to quaternary structure, F-type ATPases have 2 components, F(1) - the catalytic core - and F(0) - the membrane proton channel. F(1) has five subunits: alpha(3), beta(3), gamma(1), delta(1), epsilon(1). F(0) has three main subunits: a(1), b(2) and c(10-14). The alpha and beta chains form an alternating ring which encloses part of the gamma chain. F(1) is attached to F(0) by a central stalk formed by the gamma and epsilon chains, while a peripheral stalk is formed by the delta and b chains.

It localises to the cell inner membrane. Its function is as follows. F(1)F(0) ATP synthase produces ATP from ADP in the presence of a proton or sodium gradient. F-type ATPases consist of two structural domains, F(1) containing the extramembraneous catalytic core and F(0) containing the membrane proton channel, linked together by a central stalk and a peripheral stalk. During catalysis, ATP synthesis in the catalytic domain of F(1) is coupled via a rotary mechanism of the central stalk subunits to proton translocation. Functionally, component of the F(0) channel, it forms part of the peripheral stalk, linking F(1) to F(0). The chain is ATP synthase subunit b from Actinobacillus pleuropneumoniae serotype 7 (strain AP76).